The chain runs to 386 residues: Protein U3 (386 aa).

The polypeptide is Protein U3 (U3) (Human herpesvirus 6B (strain Z29) (HHV-6 variant B)).